Reading from the N-terminus, the 436-residue chain is Aminopeptidase C (436 aa).

Residues C68, H356, and N378 contribute to the active site.

The protein belongs to the peptidase C1 family. In terms of assembly, homohexamer.

It carries out the reaction Inactivates bleomycin B2 (a cytotoxic glycometallopeptide) by hydrolysis of a carboxyamide bond of beta-aminoalanine, but also shows general aminopeptidase activity. The specificity varies somewhat with source, but amino acid arylamides of Met, Leu and Ala are preferred.. Hydrolyzes naphthylamide-substituted amino acids as well as di- and tripeptides in which the half-cystine residue is involved in a disulfide loop, notably in oxytocin and vasopressin. Also has a bleomycin hydrolase activity. The polypeptide is Aminopeptidase C (pepC) (Lactococcus lactis subsp. cremoris (Streptococcus cremoris)).